We begin with the raw amino-acid sequence, 551 residues long: Probable aldehyde dehydrogenase (551 aa).

Residue glycine 278–alanine 283 coordinates NAD(+). Catalysis depends on glutamate 297, which acts as the Proton acceptor. The active-site Nucleophile is the cysteine 332.

The protein belongs to the aldehyde dehydrogenase family. As to expression, in uninfected plants, highest levels found in stems. In plants infected with the flax rust, highest levels in leaves. Higher levels of expression in infected leaves than uninfected stems.

The enzyme catalyses an aldehyde + NAD(+) + H2O = a carboxylate + NADH + 2 H(+). Its function is as follows. Could be involved in facilitating the biotrophic relationship between the plant and the rust fungus. This chain is Probable aldehyde dehydrogenase (FIS1), found in Linum usitatissimum (Flax).